We begin with the raw amino-acid sequence, 179 residues long: Large ribosomal subunit protein uL10 (179 aa).

It belongs to the universal ribosomal protein uL10 family. In terms of assembly, part of the ribosomal stalk of the 50S ribosomal subunit. The N-terminus interacts with L11 and the large rRNA to form the base of the stalk. The C-terminus forms an elongated spine to which L12 dimers bind in a sequential fashion forming a multimeric L10(L12)X complex.

In terms of biological role, forms part of the ribosomal stalk, playing a central role in the interaction of the ribosome with GTP-bound translation factors. This chain is Large ribosomal subunit protein uL10, found in Thermotoga neapolitana (strain ATCC 49049 / DSM 4359 / NBRC 107923 / NS-E).